A 264-amino-acid chain; its full sequence is Undecaprenyl-diphosphatase (264 aa).

8 helical membrane passes run 7–27 (VVIL…SSGH), 39–59 (LPIV…MIYY), 89–109 (ILLI…IEMF), 112–132 (LFTL…LFLL), 145–165 (ILLA…PGIS), 182–202 (SESF…SLLL), 212–232 (MLFS…VGLF), and 244–264 (SKLY…YFLF).

This sequence belongs to the UppP family.

It localises to the cell inner membrane. The catalysed reaction is di-trans,octa-cis-undecaprenyl diphosphate + H2O = di-trans,octa-cis-undecaprenyl phosphate + phosphate + H(+). Catalyzes the dephosphorylation of undecaprenyl diphosphate (UPP). Confers resistance to bacitracin. This is Undecaprenyl-diphosphatase from Borrelia hermsii (strain HS1 / DAH).